The chain runs to 429 residues: BURP domain-containing protein 3 (429 aa).

The N-terminal stretch at 1–21 (MDRLLACLLGFLLIASVGSHA) is a signal peptide. Residues 59 to 81 (GGGVHVDAGHGKPGGTTVDVGKG) are disordered. The 216-residue stretch at 213–428 (FFLEKDLHPG…PQDHVVWTRS (216 aa)) folds into the BURP domain.

Expressed in stems, leaves, shoot, panicles and stamen.

The protein is BURP domain-containing protein 3 (BURP3) of Oryza sativa subsp. japonica (Rice).